The chain runs to 908 residues: 26S proteasome non-ATPase regulatory subunit 2 (908 aa).

Position 1 is an N-acetylmethionine (Met-1). Positions 1–52 (MEEGGRDKAPLQPQQPPATSPGSGDEKPSGKERRDAGDKDKEQELSEEDKQL) are disordered. The span at 24-52 (GDEKPSGKERRDAGDKDKEQELSEEDKQL) shows a compositional bias: basic and acidic residues. Residues Ser-29 and Ser-147 each carry the phosphoserine modification. Tyr-194 bears the Phosphotyrosine mark. Phosphoserine is present on residues Ser-361 and Ser-363. PC repeat units lie at residues 409–442 (SAAASLGMILLWDVDGGLTQIDKYLYSSEDYIKS), 443–479 (GALLACGIVNSGVRNECDPALALLSDYVLHNSNTMRL), 480–514 (GSIFGLGLAYAGSNREDVLTLLLPVMGDSKSSMEV), 517–551 (VTALACGMIAVGSCNGDVTSTILQTIMEKSETELK), and 560–589 (LGLGLNHLGKGEAIEAILAALEVVSEPFRS). The residue at position 551 (Lys-551) is an N6-acetyllysine. The span at 623–643 (KEKEEDKDKKEKKDKDKKEAP) shows a compositional bias: basic and acidic residues. Positions 623-645 (KEKEEDKDKKEKKDKDKKEAPAD) are disordered. PC repeat units follow at residues 692–723 (LALALISVSNPRLNILDTLSKFSHDADPEVSY) and 742–757 (AAMLRQLAQYHAKDPN). The segment at 708–903 (DTLSKFSHDA…LEGFVILRKN (196 aa)) is required for interaction with UBLCP1.

The protein belongs to the proteasome subunit S2 family. As to quaternary structure, component of the 19S proteasome regulatory particle complex. The 26S proteasome consists of a 20S core particle (CP) and two 19S regulatory subunits (RP). The regulatory particle is made of a lid composed of 9 subunits, a base containing 6 ATPases and few additional components including PSMD2. Interacts with RPGRIP1L. Interacts with CRY1 in a KDM8-dependent manner. Interacts (via C-terminus) with phosphatase UBLCP1 (via ubiquitin-like domain); the interaction recruits UBLCP1 to the 19S regulatory particle where it dephosphorylates 19S subunit PSMC2/RPT1 which impairs PSMC2 ATPase activity and disrupts 26S proteasome assembly.

Its function is as follows. Component of the 26S proteasome, a multiprotein complex involved in the ATP-dependent degradation of ubiquitinated proteins. This complex plays a key role in the maintenance of protein homeostasis by removing misfolded or damaged proteins, which could impair cellular functions, and by removing proteins whose functions are no longer required. Therefore, the proteasome participates in numerous cellular processes, including cell cycle progression, apoptosis, or DNA damage repair. In terms of biological role, binds to the intracellular domain of tumor necrosis factor type 1 receptor. The binding domain of TRAP1 and TRAP2 resides outside the death domain of TNFR1. The sequence is that of 26S proteasome non-ATPase regulatory subunit 2 (PSMD2) from Bos taurus (Bovine).